Here is a 334-residue protein sequence, read N- to C-terminus: Galactosylgalactosylxylosylprotein 3-beta-glucuronosyltransferase 1 (334 aa).

Residues 1-6 are Cytoplasmic-facing; the sequence is MPKRRD. Residues 3-5 form an essential for transport from endoplasmic reticulum to Golgi apparatus and interaction with SAR1A region; that stretch reads KRR. A helical; Signal-anchor for type II membrane protein transmembrane segment spans residues 7 to 27; it reads ILAIVLIVLPWTLLITVWHQS. The Lumenal segment spans residues 28 to 334; the sequence is TLAPLLAVHK…KGFTDPSVEI (307 aa). Positions 37 to 56 are disordered; it reads KDEGSDPRRETPPGADPREY. 91–93 lines the UDP-alpha-D-glucuronate pocket; it reads PTY. Phosphothreonine is present on residues threonine 103 and threonine 108. Aspartate 122 contributes to the UDP-alpha-D-glucuronate binding site. Residue asparagine 140 is glycosylated (N-linked (GlcNAc...) asparagine). 2 residues coordinate UDP-alpha-D-glucuronate: arginine 165 and arginine 170. Asparagine 184 carries an N-linked (GlcNAc...) asparagine glycan. 195 to 197 contributes to the UDP-alpha-D-glucuronate binding site; the sequence is DDD. Residue aspartate 197 participates in Mn(2+) binding. The interval 245–254 is interaction with galactose moiety of substrate glycoprotein; it reads FDPHRPFAID. Glutamate 284 acts as the Proton donor/acceptor in catalysis. An N-linked (GlcNAc...) asparagine glycan is attached at asparagine 303. 311-313 is a binding site for UDP-alpha-D-glucuronate; it reads HTR.

This sequence belongs to the glycosyltransferase 43 family. In terms of assembly, homodimer. Interacts with SAR1A. It depends on Mn(2+) as a cofactor. In terms of processing, the soluble form derives from the membrane form by proteolytic processing. As to expression, mainly expressed in the brain.

Its subcellular location is the golgi apparatus membrane. The protein localises to the secreted. It localises to the endoplasmic reticulum membrane. It catalyses the reaction 3-O-(beta-D-galactosyl-(1-&gt;3)-beta-D-galactosyl-(1-&gt;4)-beta-D-xylosyl)-L-seryl-[protein] + UDP-alpha-D-glucuronate = 3-O-(beta-D-GlcA-(1-&gt;3)-beta-D-Gal-(1-&gt;3)-beta-D-Gal-(1-&gt;4)-beta-D-Xyl)-L-seryl-[protein] + UDP + H(+). Its pathway is protein modification; protein glycosylation. Involved in the biosynthesis of L2/HNK-1 carbohydrate epitope on glycoproteins. Can also play a role in glycosaminoglycan biosynthesis. Substrates include asialo-orosomucoid (ASOR), asialo-fetuin, and asialo-neural cell adhesion molecule. Requires sphingomyelin for activity: stearoyl-sphingomyelin was the most effective, followed by palmitoyl-sphingomyelin and lignoceroyl-sphingomyelin. Activity was demonstrated only for sphingomyelin with a saturated fatty acid and not for that with an unsaturated fatty acid, regardless of the length of the acyl group. In Homo sapiens (Human), this protein is Galactosylgalactosylxylosylprotein 3-beta-glucuronosyltransferase 1.